The primary structure comprises 314 residues: Synaptophysin (314 aa).

Topologically, residues 1 to 25 are cytoplasmic; that stretch reads MLLLADMDVVNQLVAGGQFRVVKEP. The MARVEL domain occupies 21–228; it reads VVKEPLGFVK…NLWFVFKETG (208 aa). A helical membrane pass occupies residues 26–49; that stretch reads LGFVKVLQWVFAIFAFATCGSYTG. Residues 50–107 are Vesicular-facing; the sequence is ELRLSVECANKTESALNIEVEFEYPFRLHQVYFDAPSCVKGGTTKIFLVGDYSSSAEF. N-linked (GlcNAc...) asparagine glycosylation occurs at Asn-59. Position 81 is a phosphotyrosine (Tyr-81). Residues 108-131 traverse the membrane as a helical segment; sequence FVTVAVFAFLYSMGALATYIFLQN. The Cytoplasmic portion of the chain corresponds to 132–138; that stretch reads KYRENNK. Residues 139–162 traverse the membrane as a helical segment; that stretch reads GPMMDFLATAVFAFMWLVSSSAWA. Over 163–200 the chain is Vesicular; it reads KGLSDVKMATDPENIIKEMPMCRQTGNTCKELRDPVTS. A helical membrane pass occupies residues 201-224; the sequence is GLNTSVVFGFLNLVLWVGNLWFVF. Residues 225-314 are Cytoplasmic-facing; that stretch reads KETGWAAPFM…GAPTSFSNQM (90 aa). Phosphothreonine is present on Thr-227. Residues 239 to 314 form a disordered region; the sequence is GAPEKQPAPG…GAPTSFSNQM (76 aa). A compositionally biased stretch (gly residues) spans 254–264; sequence AGYGQGPGGYG. Residues 255–305 form a repeats, Gly-rich region; sequence GYGQGPGGYGPQDSYGPQGGYQPDYGQPASGGGGGYGPQGDYGQQGYGQQG. Positions 265–282 are enriched in low complexity; it reads PQDSYGPQGGYQPDYGQP. Tyr-279 and Tyr-296 each carry phosphotyrosine. Positions 283–303 are enriched in gly residues; that stretch reads ASGGGGGYGPQGDYGQQGYGQ.

Belongs to the synaptophysin/synaptobrevin family. Homohexamer or homotetramer. Interacts with SRCIN1. Interacts with VAMP2; the interaction is inhibited by interaction of VAPM2 with SEPT8. Ubiquitinated; mediated by SIAH1 or SIAH2 and leading to its subsequent proteasomal degradation. In terms of processing, phosphorylated by SRC.

The protein localises to the cytoplasmic vesicle. It is found in the secretory vesicle. The protein resides in the synaptic vesicle membrane. Its subcellular location is the synapse. It localises to the synaptosome. Possibly involved in structural functions as organizing other membrane components or in targeting the vesicles to the plasma membrane. Involved in the regulation of short-term and long-term synaptic plasticity. This is Synaptophysin (Syp) from Mus musculus (Mouse).